The sequence spans 121 residues: Large ribosomal subunit protein uL22c (121 aa).

Belongs to the universal ribosomal protein uL22 family. Part of the 50S ribosomal subunit.

It localises to the plastid. Its subcellular location is the chloroplast. Functionally, this protein binds specifically to 23S rRNA. Its function is as follows. The globular domain of the protein is located near the polypeptide exit tunnel on the outside of the subunit, while an extended beta-hairpin is found that lines the wall of the exit tunnel in the center of the 70S ribosome. In Guillardia theta (Cryptophyte), this protein is Large ribosomal subunit protein uL22c (rpl22).